Here is an 815-residue protein sequence, read N- to C-terminus: Phenylalanine--tRNA ligase beta subunit (815 aa).

In terms of domain architecture, tRNA-binding spans 40 to 155 (APPFDKIVVA…EDAPVGQNIR (116 aa)). Positions 406 to 485 (PQRRPVSLRL…RIYGFERIAA (80 aa)) constitute a B5 domain. Mg(2+) is bound by residues Asp-463, Asp-469, Glu-472, and Glu-473. The 103-residue stretch at 712–814 (SKFPAAVRDL…LGEAFQARLR (103 aa)) folds into the FDX-ACB domain.

Belongs to the phenylalanyl-tRNA synthetase beta subunit family. Type 1 subfamily. Tetramer of two alpha and two beta subunits. It depends on Mg(2+) as a cofactor.

The protein resides in the cytoplasm. It catalyses the reaction tRNA(Phe) + L-phenylalanine + ATP = L-phenylalanyl-tRNA(Phe) + AMP + diphosphate + H(+). The sequence is that of Phenylalanine--tRNA ligase beta subunit from Cupriavidus pinatubonensis (strain JMP 134 / LMG 1197) (Cupriavidus necator (strain JMP 134)).